Here is a 109-residue protein sequence, read N- to C-terminus: MRGLLTVPAPAQAAAGAGAFDPDRGWRLHAQVAVRPEPFGALLYHFGTRKLSFLKNRTILAVVRSLADHPDVRSACRAAGVDDSEHAPYLHALSVLAGSHMLVPQEADQ.

The protein belongs to the peptide chaperone MftB family. In terms of assembly, interacts with MftA and MftC.

Its function is as follows. Peptide chaperone involved in the biosynthesis of the enzyme cofactor mycofactocin (MFT). Binds MftA and MftC with high affinity, and is essential for MftC activity on MftA, likely via the formation of a ternary complex. In Mycobacterium ulcerans (strain Agy99), this protein is Peptide chaperone MftB.